A 908-amino-acid polypeptide reads, in one-letter code: MGKHDKKTGKGRLDKFYRLAKEQGYRARSAFKLVHLNRKYDLLSKARCCIDLCAAPGGWLQVAEKYMPKGSLIIGVDLNAIKPLPHVTTFVADITTPHCRQTLRQHMHDWKADLVLHDGAPNVGSAWVQDAFTQNELVLQSLKLATEFLAKGGSFVTKVFRSQDYNSLLWVFGQLFKSVEATKPPSSRNVSAEIFVVCRDFIAPKHIDPKFLDPKHVFKDIASLPTSITEPTDTSIAPTSSSTASAAAAAARLAANSHAHSNVYAPEKKRRHREGYAEGDYTLHHTASAEEFVRGQDPVLLLGNMNKIEFRNETEKGWLKSRHTTPDIIANFEDLKVLGKGDFKALMKWRLAIRLEIGLDVKADKTQDATEEVVVEPMDEEEQITEELQKLQQAKLAKTKRERKRANEKKARELLKLQLNMTVPDDLDQNDLALQGEEEIFDLEEGENEARRRGKNGGLATLVDDGEGMDLASESEEEEDEDEEDDEVLDSDEERERKTAALEGELDGLYDSYVERKKERDAKWKVKQDRLKDKNFDAWHGIQEKSDEEGSDDDDGQDDDEEGGWDVIAQKKAKYGEGDSSDSDSDAEPETEVPKKIKKVSFEKPARSEKSSGLMTSLREPELRAQRSKQAQLWFDQPVFKEVGDLAALDGDDEEEEEEDESEEEESDDEDVDMEDASESSSTLEGDDDFEIVPQAPEDDGPEWDVDDEDQDEVKKKVIQDKGLLTAEAVSLATALVNRKTTADKLIDQGFNRLSAHNKDGLPTWFLDDESQFYKPNIPITKEAVDALRARQRALDARPIKKVAEAKGRKKMKAVARMEKAKKKADGVMESEEMGDGEKARQVRRMLARAAKGKEKAKEKKIVVAKGVNKGVKGRPTGVKGKYKIVDARMRKEVRALKRIKKAGSKRR.

S-adenosyl-L-methionine contacts are provided by G57, W59, D77, D93, and D118. The active-site Proton acceptor is the K158. Positions 378 to 422 (MDEEEQITEELQKLQQAKLAKTKRERKRANEKKARELLKLQLNMT) form a coiled coil. Disordered regions lie at residues 440-513 (IFDL…YDSY), 535-715 (NFDA…DEVK), and 806-841 (AKGR…EKAR). Residues 464-493 (DDGEGMDLASESEEEEDEDEEDDEVLDSDE) are compositionally biased toward acidic residues. The span at 535–545 (NFDAWHGIQEK) shows a compositional bias: basic and acidic residues. Acidic residues-rich tracts occupy residues 546 to 564 (SDEE…EEGG) and 579 to 591 (DSSD…EPET). Over residues 592–610 (EVPKKIKKVSFEKPARSEK) the composition is skewed to basic and acidic residues. Acidic residues-rich tracts occupy residues 650–678 (DGDD…EDAS) and 685–712 (EGDD…EDQD). A compositionally biased stretch (basic and acidic residues) spans 816 to 827 (ARMEKAKKKADG).

Belongs to the class I-like SAM-binding methyltransferase superfamily. RNA methyltransferase RlmE family. SPB1 subfamily. In terms of assembly, component of the nucleolar and nucleoplasmic pre-60S ribosomal particle.

It is found in the nucleus. The protein resides in the nucleolus. It catalyses the reaction a ribonucleotide in rRNA + S-adenosyl-L-methionine = a 2'-O-methylribonucleotide in rRNA + S-adenosyl-L-homocysteine + H(+). Required for proper assembly of pre-ribosomal particles during the biogenesis of the 60S ribosomal subunit. This chain is AdoMet-dependent rRNA methyltransferase SPB1, found in Cryptococcus neoformans var. neoformans serotype D (strain B-3501A) (Filobasidiella neoformans).